The chain runs to 286 residues: GTP cyclohydrolase MptA (286 aa).

This sequence belongs to the GTP cyclohydrolase IV family. As to quaternary structure, homodimer. Requires Fe(2+) as cofactor.

It catalyses the reaction GTP + H2O = 7,8-dihydroneopterin 2',3'-cyclic phosphate + formate + diphosphate + H(+). It functions in the pathway cofactor biosynthesis; 5,6,7,8-tetrahydromethanopterin biosynthesis. In terms of biological role, converts GTP to 7,8-dihydro-D-neopterin 2',3'-cyclic phosphate, the first intermediate in the biosynthesis of coenzyme methanopterin. The polypeptide is GTP cyclohydrolase MptA (Thermoplasma acidophilum (strain ATCC 25905 / DSM 1728 / JCM 9062 / NBRC 15155 / AMRC-C165)).